The primary structure comprises 156 residues: Putative pre-16S rRNA nuclease (156 aa).

This sequence belongs to the YqgF nuclease family.

The protein localises to the cytoplasm. Functionally, could be a nuclease involved in processing of the 5'-end of pre-16S rRNA. This Gloeobacter violaceus (strain ATCC 29082 / PCC 7421) protein is Putative pre-16S rRNA nuclease.